A 206-amino-acid polypeptide reads, in one-letter code: N-(5'-phosphoribosyl)anthranilate isomerase (206 aa).

The protein belongs to the TrpF family.

It catalyses the reaction N-(5-phospho-beta-D-ribosyl)anthranilate = 1-(2-carboxyphenylamino)-1-deoxy-D-ribulose 5-phosphate. The protein operates within amino-acid biosynthesis; L-tryptophan biosynthesis; L-tryptophan from chorismate: step 3/5. The protein is N-(5'-phosphoribosyl)anthranilate isomerase of Pseudomonas savastanoi pv. phaseolicola (strain 1448A / Race 6) (Pseudomonas syringae pv. phaseolicola (strain 1448A / Race 6)).